Here is a 365-residue protein sequence, read N- to C-terminus: Putrescine carbamoyltransferase (365 aa).

Residues 54 to 58 (STRTR), arginine 105, and histidine 132 contribute to the carbamoyl phosphate site. 277 to 280 (HCLP) is a putrescine binding site.

This sequence belongs to the aspartate/ornithine carbamoyltransferase superfamily. PTCase family. Homotrimer.

The protein resides in the cytoplasm. It carries out the reaction carbamoyl phosphate + putrescine = N-carbamoylputrescine + phosphate + H(+). Its pathway is amine and polyamine biosynthesis; putrescine biosynthesis via agmatine pathway; putrescine from N-carbamoylputrescine (transferase route): step 1/1. Catalyzes the phosphorolysis of N-carbamoylputrescine to form carbamoyl phosphate and putrescine. Is involved in the degradation pathway of the polyamine agmatine. This Mycoplasma capricolum subsp. capricolum (strain California kid / ATCC 27343 / NCTC 10154) protein is Putrescine carbamoyltransferase.